Consider the following 36-residue polypeptide: uncharacterized protein (36 aa).

This is an uncharacterized protein from Saccharomyces cerevisiae (strain ATCC 204508 / S288c) (Baker's yeast).